We begin with the raw amino-acid sequence, 276 residues long: Membrane protein insertase YidC 2 (276 aa).

The N-terminal stretch at 1–22 (MGVKKKLKLTSLLGLSLLIMTA) is a signal peptide. Residue Cys-23 is the site of N-palmitoyl cysteine attachment. The S-diacylglycerol cysteine moiety is linked to residue Cys-23. 4 helical membrane passes run 58–78 (ISIGVGIILFTVLIRTVLLPV), 130–150 (SDSLWPILIQMPVILALFQAL), 169–189 (VDTTLVLPILAAVFTFLSTWL), and 207–227 (GIPVLIFIFAVYAPGGVALYW).

It belongs to the OXA1/ALB3/YidC family. Type 2 subfamily. In terms of assembly, interacts with KhpB (also called EloR/Jag).

The protein resides in the cell membrane. Required for the insertion and/or proper folding and/or complex formation of integral membrane proteins into the membrane. Involved in integration of membrane proteins that insert both dependently and independently of the Sec translocase complex, as well as at least some lipoproteins. This is Membrane protein insertase YidC 2 from Streptococcus pneumoniae (strain ATCC BAA-255 / R6).